The primary structure comprises 142 residues: MKLSAEDKHNVKTTWDHIKGHEEALGAEALFRMFTSLPATRTYFPAKDLSEGSSFLHSHGKKVMGALSNAVAHIDDIDAALCKLSDKHAQDLMVDPANFPKLAHNILVVMGIHLKAHLTYPVHCSVDKFLDVVGHVLTSKYR.

The region spanning 2 to 142 (KLSAEDKHNV…VGHVLTSKYR (141 aa)) is the Globin domain. Position 59 (His-59) interacts with O2. His-88 contacts heme b.

Belongs to the globin family. As to quaternary structure, heterotetramer of two alpha chains and two beta chains. As to expression, red blood cells.

Its function is as follows. Involved in oxygen transport from the lung to the various peripheral tissues. The polypeptide is Hemoglobin subunit alpha (HBA) (Taricha granulosa (Roughskin newt)).